The following is a 217-amino-acid chain: 3,4-dihydroxy-2-butanone 4-phosphate synthase (217 aa).

Residues 37–38 (RE), Asp-42, 150–154 (RGGHT), and Glu-174 each bind D-ribulose 5-phosphate. Residue Glu-38 coordinates Mg(2+). His-153 is a binding site for Mg(2+).

This sequence belongs to the DHBP synthase family. Homodimer. Mg(2+) serves as cofactor. Requires Mn(2+) as cofactor.

It catalyses the reaction D-ribulose 5-phosphate = (2S)-2-hydroxy-3-oxobutyl phosphate + formate + H(+). Its pathway is cofactor biosynthesis; riboflavin biosynthesis; 2-hydroxy-3-oxobutyl phosphate from D-ribulose 5-phosphate: step 1/1. Its function is as follows. Catalyzes the conversion of D-ribulose 5-phosphate to formate and 3,4-dihydroxy-2-butanone 4-phosphate. This is 3,4-dihydroxy-2-butanone 4-phosphate synthase from Klebsiella pneumoniae (strain 342).